Reading from the N-terminus, the 369-residue chain is Chorismate synthase (369 aa).

The NADP(+) site is built by arginine 48 and arginine 54. Residues 125–127, 238–239, glycine 278, 293–297, and arginine 319 each bind FMN; these read RSS, NA, and KPTSS.

The protein belongs to the chorismate synthase family. In terms of assembly, homotetramer. FMNH2 is required as a cofactor.

The catalysed reaction is 5-O-(1-carboxyvinyl)-3-phosphoshikimate = chorismate + phosphate. Its pathway is metabolic intermediate biosynthesis; chorismate biosynthesis; chorismate from D-erythrose 4-phosphate and phosphoenolpyruvate: step 7/7. Catalyzes the anti-1,4-elimination of the C-3 phosphate and the C-6 proR hydrogen from 5-enolpyruvylshikimate-3-phosphate (EPSP) to yield chorismate, which is the branch point compound that serves as the starting substrate for the three terminal pathways of aromatic amino acid biosynthesis. This reaction introduces a second double bond into the aromatic ring system. In Cupriavidus necator (strain ATCC 17699 / DSM 428 / KCTC 22496 / NCIMB 10442 / H16 / Stanier 337) (Ralstonia eutropha), this protein is Chorismate synthase.